Reading from the N-terminus, the 328-residue chain is Methionyl-tRNA formyltransferase (328 aa).

Position 110–113 (110–113 (SLLP)) interacts with (6S)-5,6,7,8-tetrahydrofolate.

Belongs to the Fmt family.

It carries out the reaction L-methionyl-tRNA(fMet) + (6R)-10-formyltetrahydrofolate = N-formyl-L-methionyl-tRNA(fMet) + (6S)-5,6,7,8-tetrahydrofolate + H(+). Its function is as follows. Attaches a formyl group to the free amino group of methionyl-tRNA(fMet). The formyl group appears to play a dual role in the initiator identity of N-formylmethionyl-tRNA by promoting its recognition by IF2 and preventing the misappropriation of this tRNA by the elongation apparatus. This is Methionyl-tRNA formyltransferase from Prochlorococcus marinus (strain AS9601).